The chain runs to 187 residues: Elongation factor P (187 aa).

N6-(3,6-diaminohexanoyl)-5-hydroxylysine is present on lysine 34.

Belongs to the elongation factor P family. In terms of processing, may be beta-lysylated on the epsilon-amino group of Lys-34 by the combined action of EpmA and EpmB, and then hydroxylated on the C5 position of the same residue by EpmC (if this protein is present). Lysylation is critical for the stimulatory effect of EF-P on peptide-bond formation. The lysylation moiety may extend toward the peptidyltransferase center and stabilize the terminal 3-CCA end of the tRNA. Hydroxylation of the C5 position on Lys-34 may allow additional potential stabilizing hydrogen-bond interactions with the P-tRNA.

The protein resides in the cytoplasm. The protein operates within protein biosynthesis; polypeptide chain elongation. Functionally, involved in peptide bond synthesis. Alleviates ribosome stalling that occurs when 3 or more consecutive Pro residues or the sequence PPG is present in a protein, possibly by augmenting the peptidyl transferase activity of the ribosome. Modification of Lys-34 is required for alleviation. This Vesicomyosocius okutanii subsp. Calyptogena okutanii (strain HA) protein is Elongation factor P.